The following is a 286-amino-acid chain: GTP cyclohydrolase 1 type 2 homolog (286 aa).

A divalent metal cation is bound by residues histidine 66, histidine 67, aspartate 103, histidine 254, and glutamate 258.

It belongs to the GTP cyclohydrolase I type 2/NIF3 family. Homohexamer.

This chain is GTP cyclohydrolase 1 type 2 homolog, found in Treponema pallidum (strain Nichols).